The following is a 179-amino-acid chain: NADH dehydrogenase [ubiquinone] 1 beta subcomplex subunit 9 (179 aa).

At alanine 2 the chain carries N-acetylalanine. Phosphoserine is present on serine 85.

The protein belongs to the complex I LYR family. In terms of assembly, mammalian complex I is composed of 45 different subunits.

The protein resides in the mitochondrion inner membrane. Functionally, accessory subunit of the mitochondrial membrane respiratory chain NADH dehydrogenase (Complex I), that is believed to be not involved in catalysis. Complex I functions in the transfer of electrons from NADH to the respiratory chain. The immediate electron acceptor for the enzyme is believed to be ubiquinone. The sequence is that of NADH dehydrogenase [ubiquinone] 1 beta subcomplex subunit 9 (Ndufb9) from Mus musculus (Mouse).